A 173-amino-acid polypeptide reads, in one-letter code: Bifunctional protein PyrR (173 aa).

A PRPP-binding motif is present at residues 93–105; sequence IILIDDVLYTGRT.

This sequence belongs to the purine/pyrimidine phosphoribosyltransferase family. PyrR subfamily. Homodimer and homohexamer; in equilibrium.

The catalysed reaction is UMP + diphosphate = 5-phospho-alpha-D-ribose 1-diphosphate + uracil. Its function is as follows. Regulates transcriptional attenuation of the pyrimidine nucleotide (pyr) operon by binding in a uridine-dependent manner to specific sites on pyr mRNA. This disrupts an antiterminator hairpin in the RNA and favors formation of a downstream transcription terminator, leading to a reduced expression of downstream genes. Also displays a weak uracil phosphoribosyltransferase activity which is not physiologically significant. This Streptococcus agalactiae serotype Ia (strain ATCC 27591 / A909 / CDC SS700) protein is Bifunctional protein PyrR.